The sequence spans 204 residues: Somatotropin (204 aa).

The signal sequence occupies residues methionine 1–serine 17. Position 18 is a pyrrolidone carboxylic acid (glutamine 18). Residue histidine 36 participates in Zn(2+) binding. An intrachain disulfide couples cysteine 69 to cysteine 177. Glutamate 186 is a binding site for Zn(2+). Residues cysteine 194 and cysteine 202 are joined by a disulfide bond.

The protein belongs to the somatotropin/prolactin family.

It localises to the secreted. Its function is as follows. Growth hormone plays an important role in growth control and is involved in the regulation of several anabolic processes. Implicated as an osmoregulatory substance important for seawater adaptation. This Acanthopagrus latus (Yellowfin seabream) protein is Somatotropin (gh).